Consider the following 213-residue polypeptide: Maleamate amidohydrolase (213 aa).

Residue Cys154 is the Nucleophile of the active site.

The protein belongs to the isochorismatase family.

The catalysed reaction is maleamate + H2O = maleate + NH4(+). Its pathway is cofactor degradation; nicotinate degradation. Maleamate amidase that transforms maleamate into maleate and ammonia in the aerobic nicotinate degradation pathway. The protein is Maleamate amidohydrolase (nicF) of Pseudomonas putida (strain ATCC 47054 / DSM 6125 / CFBP 8728 / NCIMB 11950 / KT2440).